The chain runs to 139 residues: Large ribosomal subunit protein bL17 (139 aa).

Belongs to the bacterial ribosomal protein bL17 family. In terms of assembly, part of the 50S ribosomal subunit. Contacts protein L32.

The protein is Large ribosomal subunit protein bL17 of Cereibacter sphaeroides (strain ATCC 17029 / ATH 2.4.9) (Rhodobacter sphaeroides).